A 151-amino-acid polypeptide reads, in one-letter code: Putative phosphatidylglycerol/phosphatidylinositol transfer protein 1 (151 aa).

The N-terminal stretch at 1–26 (MKHSKNQIVYITFFIIILIVVKPIES) is a signal peptide.

Belongs to the NPC2 family. In terms of assembly, monomer.

Catalyzes the intermembrane transfer of phosphatidylglycerol and phosphatidylinositol. The sequence is that of Putative phosphatidylglycerol/phosphatidylinositol transfer protein 1 from Dictyostelium discoideum (Social amoeba).